Here is a 194-residue protein sequence, read N- to C-terminus: Thymidine kinase (194 aa).

Residues 15 to 22 (GPMFSGKS) and 89 to 92 (DEAH) contribute to the ATP site. The Proton acceptor role is filled by Glu-90. Zn(2+) contacts are provided by Cys-146, Cys-149, Cys-178, and Cys-181.

Belongs to the thymidine kinase family. Homotetramer.

It localises to the cytoplasm. The enzyme catalyses thymidine + ATP = dTMP + ADP + H(+). The protein is Thymidine kinase of Metamycoplasma arthritidis (strain 158L3-1) (Mycoplasma arthritidis).